Reading from the N-terminus, the 54-residue chain is Small ribosomal subunit protein uS14 (54 aa).

Zn(2+) is bound by residues cysteine 19, cysteine 22, cysteine 37, and cysteine 40.

This sequence belongs to the universal ribosomal protein uS14 family. Zinc-binding uS14 subfamily. As to quaternary structure, part of the 30S ribosomal subunit. Zn(2+) is required as a cofactor.

Binds 16S rRNA, required for the assembly of 30S particles. The sequence is that of Small ribosomal subunit protein uS14 from Sulfolobus acidocaldarius (strain ATCC 33909 / DSM 639 / JCM 8929 / NBRC 15157 / NCIMB 11770).